Consider the following 561-residue polypeptide: CWF19-like protein mug161 (561 aa).

A disordered region spans residues 286-338; it reads QQTNKFHKSKSSTALFKSKKDSSSSLNKMHKSESHSALNNLHKSESGTSLNNR. A Phosphoserine modification is found at S296. At T298 the chain carries Phosphothreonine. Phosphoserine is present on residues S317, S319, S331, and S334. Residues 320–337 are compositionally biased toward polar residues; it reads HSALNNLHKSESGTSLNN.

Belongs to the CWF19 family.

It is found in the nucleus. In terms of biological role, has a role in meiosis. This Schizosaccharomyces pombe (strain 972 / ATCC 24843) (Fission yeast) protein is CWF19-like protein mug161 (mug161).